The following is a 166-amino-acid chain: RING-H2 finger protein ATL79 (166 aa).

Residues 1 to 16 (MRLLVAEAASPLSSAA) form the signal peptide. A helical transmembrane segment spans residues 41 to 61 (SVLLILVISALICALSLYAAI). Residues 71–90 (TEDDHKPDPEAAASSTPTTP) are disordered. Over residues 81–90 (AAASSTPTTP) the composition is skewed to low complexity. Residues 107-149 (CAICLSEFEQGESIQVLEKCQHGFHVKCIHKWLSTRSSCPTCR) form an RING-type; atypical zinc finger.

The protein belongs to the RING-type zinc finger family. ATL subfamily.

It is found in the membrane. The enzyme catalyses S-ubiquitinyl-[E2 ubiquitin-conjugating enzyme]-L-cysteine + [acceptor protein]-L-lysine = [E2 ubiquitin-conjugating enzyme]-L-cysteine + N(6)-ubiquitinyl-[acceptor protein]-L-lysine.. It participates in protein modification; protein ubiquitination. The polypeptide is RING-H2 finger protein ATL79 (ATL79) (Arabidopsis thaliana (Mouse-ear cress)).